The chain runs to 273 residues: Dermonecrotic toxin LhSicTox-alphaIA2aii (273 aa).

The active site involves His5. 2 residues coordinate Mg(2+): Glu25 and Asp27. His41 (nucleophile) is an active-site residue. Cystine bridges form between Cys45–Cys51 and Cys47–Cys190. Asp85 provides a ligand contact to Mg(2+).

The protein belongs to the arthropod phospholipase D family. Class II subfamily. Mg(2+) serves as cofactor. In terms of tissue distribution, expressed by the venom gland.

The protein localises to the secreted. The enzyme catalyses an N-(acyl)-sphingosylphosphocholine = an N-(acyl)-sphingosyl-1,3-cyclic phosphate + choline. It carries out the reaction an N-(acyl)-sphingosylphosphoethanolamine = an N-(acyl)-sphingosyl-1,3-cyclic phosphate + ethanolamine. It catalyses the reaction a 1-acyl-sn-glycero-3-phosphocholine = a 1-acyl-sn-glycero-2,3-cyclic phosphate + choline. The catalysed reaction is a 1-acyl-sn-glycero-3-phosphoethanolamine = a 1-acyl-sn-glycero-2,3-cyclic phosphate + ethanolamine. In terms of biological role, dermonecrotic toxins cleave the phosphodiester linkage between the phosphate and headgroup of certain phospholipids (sphingolipid and lysolipid substrates), forming an alcohol (often choline) and a cyclic phosphate. This toxin acts on sphingomyelin (SM). It may also act on ceramide phosphoethanolamine (CPE), lysophosphatidylcholine (LPC) and lysophosphatidylethanolamine (LPE), but not on lysophosphatidylserine (LPS), and lysophosphatidylglycerol (LPG). It acts by transphosphatidylation, releasing exclusively cyclic phosphate products as second products. Induces dermonecrosis, hemolysis, increased vascular permeability, edema, inflammatory response, and platelet aggregation. The sequence is that of Dermonecrotic toxin LhSicTox-alphaIA2aii from Loxosceles hirsuta (Recluse spider).